We begin with the raw amino-acid sequence, 182 residues long: ATP synthase subunit delta (182 aa).

The protein belongs to the ATPase delta chain family. As to quaternary structure, F-type ATPases have 2 components, F(1) - the catalytic core - and F(0) - the membrane proton channel. F(1) has five subunits: alpha(3), beta(3), gamma(1), delta(1), epsilon(1). F(0) has three main subunits: a(1), b(2) and c(10-14). The alpha and beta chains form an alternating ring which encloses part of the gamma chain. F(1) is attached to F(0) by a central stalk formed by the gamma and epsilon chains, while a peripheral stalk is formed by the delta and b chains.

The protein localises to the cell inner membrane. In terms of biological role, f(1)F(0) ATP synthase produces ATP from ADP in the presence of a proton or sodium gradient. F-type ATPases consist of two structural domains, F(1) containing the extramembraneous catalytic core and F(0) containing the membrane proton channel, linked together by a central stalk and a peripheral stalk. During catalysis, ATP synthesis in the catalytic domain of F(1) is coupled via a rotary mechanism of the central stalk subunits to proton translocation. Its function is as follows. This protein is part of the stalk that links CF(0) to CF(1). It either transmits conformational changes from CF(0) to CF(1) or is implicated in proton conduction. This Sulfurihydrogenibium sp. (strain YO3AOP1) protein is ATP synthase subunit delta.